Consider the following 282-residue polypeptide: MSTYLIGDVHGCYDELIALLAQVEFDPSTDTLWLTGDLVARGPGSLEVLRYVKSLGDSVRLVLGNHDLHLLAVFAGISRNKPKDRLKSLLEAPDADELLNWLRRQPLLQVDEEKKLVMAHAGITPQWDLETAQQCARDVEAVLSSDSYPFFLDAMYGDMPNHWSNELSGLARLRFISNAFTRMRYCFPNGQLDMYSKEAPEDAPAPLKPWFAIPGPVSNAYSIAFGHWASLEGRGTPEGIYALDTGCCWGGELTCLRWEDKQYFTQPSNRQKSLDEGEAVAS.

This sequence belongs to the Ap4A hydrolase family.

It carries out the reaction P(1),P(4)-bis(5'-adenosyl) tetraphosphate + H2O = 2 ADP + 2 H(+). Its function is as follows. Hydrolyzes diadenosine 5',5'''-P1,P4-tetraphosphate to yield ADP. The protein is Bis(5'-nucleosyl)-tetraphosphatase, symmetrical of Klebsiella pneumoniae (strain 342).